The primary structure comprises 516 residues: Putative protein NRT1/ PTR FAMILY 2.2 (516 aa).

A run of 11 helical transmembrane segments spans residues 31 to 51, 67 to 87, 90 to 110, 138 to 158, 174 to 194, 201 to 221, 320 to 340, 362 to 382, 394 to 414, 437 to 457, and 476 to 496; these read TLLG…VFLI, IVNG…DSFF, IPVI…LTMI, ILYI…FTLA, FFNW…TAIV, SWKL…IVFV, LLLA…LIIL, VIVI…VYPM, LQKV…SAIV, FIAS…ITLI, and VYWL…AWFY.

This sequence belongs to the major facilitator superfamily. Proton-dependent oligopeptide transporter (POT/PTR) (TC 2.A.17) family. Not detected.

The protein resides in the membrane. In terms of biological role, transporter involved in a passive nitrate efflux. The sequence is that of Putative protein NRT1/ PTR FAMILY 2.2 (NPF2.2) from Arabidopsis thaliana (Mouse-ear cress).